The chain runs to 195 residues: Peroxiredoxin bcp1 (195 aa).

Residues 46-168 (IQVGDVIPDI…SHWIFEKGTG (123 aa)) enclose the Thioredoxin domain. Residue C89 is the Cysteine sulfenic acid (-SOH) intermediate of the active site. C89 and C94 are oxidised to a cystine.

It belongs to the peroxiredoxin family. BCP/PrxQ subfamily. In terms of assembly, monomer. The active site is a conserved redox-active cysteine residue, the peroxidatic cysteine (C(P)), which makes the nucleophilic attack on the peroxide substrate. The peroxide oxidizes the C(P)-SH to cysteine sulfenic acid (C(P)-SOH), which then reacts with another cysteine residue, the resolving cysteine (C(R)), to form a disulfide bridge. The disulfide is subsequently reduced by an appropriate electron donor to complete the catalytic cycle. In this atypical 2-Cys peroxiredoxin, C(R) is present in the same subunit to form an intramolecular disulfide. The disulfide is subsequently reduced by thioredoxin.

The protein localises to the cytoplasm. It localises to the nucleus. It catalyses the reaction a hydroperoxide + [thioredoxin]-dithiol = an alcohol + [thioredoxin]-disulfide + H2O. Functionally, thiol-specific peroxidase that catalyzes the reduction of hydrogen peroxide and organic hydroperoxides to water and alcohols, respectively. Plays a role in cell protection against oxidative stress by detoxifying peroxides and as sensor of hydrogen peroxide-mediated signaling events. Acts as a scavenger of H(2)O(2). The sequence is that of Peroxiredoxin bcp1 (bcp1) from Schizosaccharomyces pombe (strain 972 / ATCC 24843) (Fission yeast).